The sequence spans 340 residues: tRNA N6-adenosine threonylcarbamoyltransferase (340 aa).

The Fe cation site is built by H113 and H117. Substrate-binding positions include 135-139 (LVSGG), D169, G182, D186, and N274. Residue D302 participates in Fe cation binding.

The protein belongs to the KAE1 / TsaD family. Requires Fe(2+) as cofactor.

It is found in the cytoplasm. It catalyses the reaction L-threonylcarbamoyladenylate + adenosine(37) in tRNA = N(6)-L-threonylcarbamoyladenosine(37) in tRNA + AMP + H(+). Required for the formation of a threonylcarbamoyl group on adenosine at position 37 (t(6)A37) in tRNAs that read codons beginning with adenine. Is involved in the transfer of the threonylcarbamoyl moiety of threonylcarbamoyl-AMP (TC-AMP) to the N6 group of A37, together with TsaE and TsaB. TsaD likely plays a direct catalytic role in this reaction. This is tRNA N6-adenosine threonylcarbamoyltransferase from Mycolicibacterium vanbaalenii (strain DSM 7251 / JCM 13017 / BCRC 16820 / KCTC 9966 / NRRL B-24157 / PYR-1) (Mycobacterium vanbaalenii).